Consider the following 272-residue polypeptide: Putative hydro-lyase Rpal_1947 (272 aa).

The protein belongs to the D-glutamate cyclase family.

In Rhodopseudomonas palustris (strain TIE-1), this protein is Putative hydro-lyase Rpal_1947.